We begin with the raw amino-acid sequence, 261 residues long: Putative hydro-lyase SSP0308 (261 aa).

The protein belongs to the D-glutamate cyclase family.

The chain is Putative hydro-lyase SSP0308 from Staphylococcus saprophyticus subsp. saprophyticus (strain ATCC 15305 / DSM 20229 / NCIMB 8711 / NCTC 7292 / S-41).